We begin with the raw amino-acid sequence, 389 residues long: Mesotocin receptor (389 aa).

The Extracellular portion of the chain corresponds to 1 to 50 (MEGLCLNLDCSELPNSSWVNSSMENQNHSSNSTRDPLKRNEEVAKVEVTV). Residues asparagine 15, asparagine 20, asparagine 27, and asparagine 31 are each glycosylated (N-linked (GlcNAc...) asparagine). Residues 51–71 (LALILFLALAGNICVLLGIYI) form a helical membrane-spanning segment. Topologically, residues 72–87 (NRHKHSRMYFFMKHLS) are cytoplasmic. A helical transmembrane segment spans residues 88-108 (IADLVVAIFQVLPQLIWDITF). The Extracellular portion of the chain corresponds to 109 to 119 (RFYAPDLVCRL). The cysteines at positions 117 and 192 are disulfide-linked. A helical membrane pass occupies residues 120–140 (VTYLQVVGMFASTYMLLLMSL). The Cytoplasmic portion of the chain corresponds to 141-159 (DRCLAICQPLRSLHRRSDC). Residues 160–180 (VYVLFTWILSFLLSTPQTVIF) form a helical membrane-spanning segment. Residues 181–207 (SLTEVGNGVYDCRADFIQPWGPKAYIT) are Extracellular-facing. The chain crosses the membrane as a helical span at residues 208–228 (WITLAVYIIPVMILSVCYGLI). Topologically, residues 229–275 (SYKIWQNIRLKTVCESNLRLSTSRRATLSRVSSVRLISKAKIRTVKM) are cytoplasmic. Residues 276 to 296 (TFIIVLAYIVCWTPFFFVQMW) traverse the membrane as a helical segment. The Extracellular segment spans residues 297-308 (SVWDPNPPKEAS). The helical transmembrane segment at 309–329 (LFIIAMLLGSLNSCCNPWIYM) threads the bilayer. Over 330 to 389 (LFTGHLFHDLLQSFLCCSARYLKTQQQGSDLSASRKSNSSTFVLSRKSSSQKSITQPSTA) the chain is Cytoplasmic. The disordered stretch occupies residues 360–389 (LSASRKSNSSTFVLSRKSSSQKSITQPSTA).

This sequence belongs to the G-protein coupled receptor 1 family. Vasopressin/oxytocin receptor subfamily. As to expression, highly expressed in the bladder. Also expressed in kidney, brain and skeletal muscle.

Its subcellular location is the cell membrane. Functionally, binds to mesotocin and may play a role in the regulation of water and salt transport. The protein is Mesotocin receptor of Rhinella marina (Cane toad).